The chain runs to 200 residues: Holliday junction branch migration complex subunit RuvA (200 aa).

The interval 1–64 (MIGQLTGLVG…EDAIQLFGFA (64 aa)) is domain I. The interval 65-143 (TTDERDWFRL…KMPGGGGTVS (79 aa)) is domain II. The segment at 144-148 (APGIV) is flexible linker. Positions 149–200 (SGPSVENDALLALAGLGFRRAEAWPVLSKVLAENENATLDLAIRLSLKDLAR) are domain III.

Belongs to the RuvA family. As to quaternary structure, homotetramer. Forms an RuvA(8)-RuvB(12)-Holliday junction (HJ) complex. HJ DNA is sandwiched between 2 RuvA tetramers; dsDNA enters through RuvA and exits via RuvB. An RuvB hexamer assembles on each DNA strand where it exits the tetramer. Each RuvB hexamer is contacted by two RuvA subunits (via domain III) on 2 adjacent RuvB subunits; this complex drives branch migration. In the full resolvosome a probable DNA-RuvA(4)-RuvB(12)-RuvC(2) complex forms which resolves the HJ.

The protein resides in the cytoplasm. The RuvA-RuvB-RuvC complex processes Holliday junction (HJ) DNA during genetic recombination and DNA repair, while the RuvA-RuvB complex plays an important role in the rescue of blocked DNA replication forks via replication fork reversal (RFR). RuvA specifically binds to HJ cruciform DNA, conferring on it an open structure. The RuvB hexamer acts as an ATP-dependent pump, pulling dsDNA into and through the RuvAB complex. HJ branch migration allows RuvC to scan DNA until it finds its consensus sequence, where it cleaves and resolves the cruciform DNA. The chain is Holliday junction branch migration complex subunit RuvA from Gluconobacter oxydans (strain 621H) (Gluconobacter suboxydans).